The chain runs to 375 residues: MILATTSSTFASLEEMVTVLSIDGGGIKGIIPGTILEFLEGQLQKMDNNADARLADYFDVIGGTSTGGLLTAMITTPNENNRPFAAANEIVPFYFEHGPHIFNSSTGQFFGPKYDGKYLMQVLQEKLGETRVHQALTEVAISSFDIKTNKPVIFTKSNLAKSPELDAKMYDICYSTAAAPTYFPPHYFATNTINGDKYKFNLVDGAVATVADPALLSVSVATRRAQEDPAFASIRSLNYKKMLLLSLGTGTTSEFDKTHTAEETAKWGALQWMLVIQQMTEAASSYMTDYYLSTVFQDLHSQNNYLRVQENALTGTTTKADDASEANMELLAQVGENLLKKPVSKDNPETYEEALKRFAKLLSDRKKLRANKASY.

The signal sequence occupies residues 1 to 11 (MILATTSSTFA). A PNPLA domain is found at 20 to 218 (LSIDGGGIKG…TVADPALLSV (199 aa)). A GXGXXG motif is present at residues 24 to 29 (GGGIKG). The GXSXG signature appears at 63–67 (GTSTG). Ser-65 serves as the catalytic Nucleophile. An N-linked (GlcNAc...) asparagine glycan is attached at Asn-103. The active-site Proton acceptor is the Asp-204. Residues 204–206 (DGA) carry the DGA/G motif. A coiled-coil region spans residues 349–373 (ETYEEALKRFAKLLSDRKKLRANKA).

The protein belongs to the patatin family. Tuber.

It localises to the vacuole. Probable lipolytic acyl hydrolase (LAH), an activity which is thought to be involved in the response of tubers to pathogens. The protein is Patatin-1-Kuras 2 (pat1-k2) of Solanum tuberosum (Potato).